A 364-amino-acid polypeptide reads, in one-letter code: Caveolae-associated protein 4 (364 aa).

Positions 1–24 (MEHNGSASNADKIHQNRLSSVTED) are disordered. Residues 44 to 77 (VDSVQASQKRIEERHREMENAIKSVQIDLLKLSQ) are a coiled coil. Phosphoserine is present on residues serine 172 and serine 173. Residues 202-226 (FSKENMQKTRQNLDKKVNRIRTRIV) are a coiled coil. Over residues 231 to 256 (RERLRQSGERLRQSGERLRQSGERFK) the composition is skewed to basic and acidic residues. Disordered stretches follow at residues 231–283 (RERL…RTVA) and 311–339 (SDEL…TPEP). A Phosphotyrosine modification is found at tyrosine 326. At threonine 336 the chain carries Phosphothreonine. Serine 355 is modified (phosphoserine).

This sequence belongs to the CAVIN family. In terms of assembly, component of the CAVIN complex composed of CAVIN1, CAVIN2, CAVIN3 and CAVIN4. Interacts with CAVIN1, ADRA1A and ADRA1B. Interacts with CAVIN2; this augments the transactivation of NPPA. Interacts with CAV3. Interacts with MAPK1 and MAPK3.

It is found in the cytoplasm. The protein resides in the myofibril. It localises to the sarcomere. Its subcellular location is the cytosol. The protein localises to the cell membrane. It is found in the sarcolemma. The protein resides in the membrane. It localises to the caveola. Functionally, modulates the morphology of formed caveolae in cardiomyocytes, but is not required for caveolar formation. Facilitates the recruitment of MAPK1/3 to caveolae within cardiomyocytes and regulates alpha-1 adrenergic receptor-induced hypertrophic responses in cardiomyocytes through MAPK1/3 activation. Contributes to proper membrane localization and stabilization of caveolin-3 (CAV3) in cardiomyocytes. Induces RHOA activation and activates NPPA transcription and myofibrillar organization through the Rho/ROCK signaling pathway. In Homo sapiens (Human), this protein is Caveolae-associated protein 4.